Here is a 237-residue protein sequence, read N- to C-terminus: Ribonuclease 3 (237 aa).

The 127-residue stretch at 8-134 (RSALLEKLGV…VIGAVYLDAG (127 aa)) folds into the RNase III domain. Mg(2+) is bound at residue Glu-47. The active site involves Asp-51. Mg(2+)-binding residues include Asp-120 and Glu-123. Glu-123 is an active-site residue. One can recognise a DRBM domain in the interval 161–229 (DPKTSLQEAA…ALSAWTALTN (69 aa)).

The protein belongs to the ribonuclease III family. Homodimer. It depends on Mg(2+) as a cofactor.

Its subcellular location is the cytoplasm. The enzyme catalyses Endonucleolytic cleavage to 5'-phosphomonoester.. Its function is as follows. Digests double-stranded RNA. Involved in the processing of primary rRNA transcript to yield the immediate precursors to the large and small rRNAs (23S and 16S). Processes some mRNAs, and tRNAs when they are encoded in the rRNA operon. Processes pre-crRNA and tracrRNA of type II CRISPR loci if present in the organism. The chain is Ribonuclease 3 from Leifsonia xyli subsp. xyli (strain CTCB07).